Reading from the N-terminus, the 137-residue chain is Peptide methionine sulfoxide reductase MsrB (137 aa).

The region spanning 7–129 (AEELKKKLSE…NSASLAFSDE (123 aa)) is the MsrB domain. Zn(2+) contacts are provided by Cys46, Cys49, Cys95, and Cys98. The active-site Nucleophile is Cys118.

It belongs to the MsrB Met sulfoxide reductase family. Requires Zn(2+) as cofactor.

The enzyme catalyses L-methionyl-[protein] + [thioredoxin]-disulfide + H2O = L-methionyl-(R)-S-oxide-[protein] + [thioredoxin]-dithiol. This Salmonella arizonae (strain ATCC BAA-731 / CDC346-86 / RSK2980) protein is Peptide methionine sulfoxide reductase MsrB.